A 450-amino-acid chain; its full sequence is UDP-N-acetylglucosamine--peptide N-acetylglucosaminyltransferase stabilizing protein GtfB (450 aa).

The protein belongs to the GtfB family. Forms a heterotetramer with 2 subunits each of GtfA and GtfB. Part of the accessory SecA2/SecY2 protein translocation apparatus required to export cell wall protein GspB.

Its subcellular location is the cell membrane. It participates in protein modification; protein glycosylation. Required for polymorphic O-glycosylation of GspB, a serine-rich repeat cell wall protein encoded upstream in the same operon. A substrate-binding protein that is part of the accessory SecA2/SecY2 system specifically required to export GspB. The GtfA-GtfB complex adds GlcNAc from UDP-GlcNAc to GspB, attaching the first sugar residue. Upon coexpression in E.coli with GtfA glycosylates GspB constructs. Binds the GspB protein substrate; alone this subunit only recognizes partially glycosylated GspB, but is constrained by GtfA to also recognize unglycosylated protein. The enzyme probably modifies its tertiary conformation by opening and closing its intersubunit interfaces to accomodate the increasingly glycosylated substrate. This chain is UDP-N-acetylglucosamine--peptide N-acetylglucosaminyltransferase stabilizing protein GtfB, found in Streptococcus gordonii.